Here is a 1036-residue protein sequence, read N- to C-terminus: Vacuolar basic amino acid transporter VSB1 (1036 aa).

Topologically, residues 1–213 are vacuolar; sequence MGRTIRRRRS…SKFAHYLPAA (213 aa). 2 positions are modified to phosphoserine: Ser42 and Ser127. At Thr130 the chain carries Phosphothreonine. Ser140, Ser144, Ser149, Ser152, and Ser153 each carry phosphoserine. A helical transmembrane segment spans residues 214 to 234; sequence VLGLLLNILDALSYGMIIFPI. Residues 235–236 lie on the Cytoplasmic side of the membrane; it reads TE. The helical transmembrane segment at 237–257 threads the bilayer; the sequence is PVFSHLGPTGISMFYISTIIS. The Vacuolar segment spans residues 258-269; the sequence is QAVYSGGWSSFP. The helical transmembrane segment at 270-290 threads the bilayer; that stretch reads SGIGSEMIEITPFYHTMALAI. The Cytoplasmic segment spans residues 291 to 300; the sequence is KEALAGNDDE. The helical transmembrane segment at 301 to 321 threads the bilayer; that stretch reads IITTTIFCYVISSMLTGVVFY. Residues 322–338 are Vacuolar-facing; sequence ALGKLRLGKIVGFFPRH. The chain crosses the membrane as a helical span at residues 339 to 359; it reads ILIGCIGGVGYFLIITGIEVT. Residues 360 to 375 lie on the Cytoplasmic side of the membrane; sequence TRVAKFEYSWPFFSGL. A helical transmembrane segment spans residues 376-396; it reads FTDYDTLAKWLLPVLLTVVLI. At 397–405 the chain is on the vacuolar side; the sequence is GTQRYFKNS. The helical transmembrane segment at 406-426 threads the bilayer; the sequence is LVLPSFYILTLVLFHFIVAII. At 427-473 the chain is on the cytoplasmic side; it reads PTLSLDALRQAGWIFPIANSDSKWYDHYRLFNVHKVHWSLVLQQIPT. The helical transmembrane segment at 474–494 threads the bilayer; the sequence is MMALTFFGILHVPINVPALAM. At 495–515 the chain is on the vacuolar side; it reads SLQMDKYDVDRELIAHGYSNF. Residues 516 to 536 traverse the membrane as a helical segment; that stretch reads FSGLLGSVQNYLVYTNSVLFI. Residues 537–546 lie on the Cytoplasmic side of the membrane; that stretch reads RAGADSPFAG. Residues 547–567 traverse the membrane as a helical segment; it reads FLLIALTICIMIIGPVIISFI. Position 568 (Pro568) is a topological domain, vacuolar. The chain crosses the membrane as a helical span at residues 569 to 589; sequence ICIVGSLIFLLGYELLVEALV. The Cytoplasmic portion of the chain corresponds to 590 to 604; the sequence is DTWNKLNRFEYLTVV. Residues 605 to 625 traverse the membrane as a helical segment; the sequence is IIVFTMGIFDFVLGIIVGILI. The Vacuolar segment spans residues 626 to 664; the sequence is ACFSFLVDSTKLQTINGEYNGNVARSTVYRDYVQTKFLD. The 122-residue stretch at 660-781 folds into the STAS domain; the sequence is TKFLDGIGEQ…ADLNSALEWC (122 aa). A helical transmembrane segment spans residues 665–685; sequence GIGEQIYVLKLQNLLFFGTII. Residues 686–1036 lie on the Cytoplasmic side of the membrane; sequence SIEEKIERLL…ELLGYTLVSA (351 aa). Ser842 carries the phosphoserine modification. Thr847 bears the Phosphothreonine mark.

It localises to the vacuole membrane. Amino acid transporter involved in vacuolar uptake of basic amino acids for storage during nitrogen replete condititions. May function as an amino acid/proton antiporter. The sequence is that of Vacuolar basic amino acid transporter VSB1 from Saccharomyces cerevisiae (strain ATCC 204508 / S288c) (Baker's yeast).